The primary structure comprises 497 residues: Probable cytosol aminopeptidase (497 aa).

Lys-263 and Asp-268 together coordinate Mn(2+). Lys-275 is an active-site residue. Mn(2+)-binding residues include Asp-286, Asp-345, and Glu-347. Residue Arg-349 is part of the active site.

Belongs to the peptidase M17 family. Mn(2+) is required as a cofactor.

The protein localises to the cytoplasm. It carries out the reaction Release of an N-terminal amino acid, Xaa-|-Yaa-, in which Xaa is preferably Leu, but may be other amino acids including Pro although not Arg or Lys, and Yaa may be Pro. Amino acid amides and methyl esters are also readily hydrolyzed, but rates on arylamides are exceedingly low.. It catalyses the reaction Release of an N-terminal amino acid, preferentially leucine, but not glutamic or aspartic acids.. In terms of biological role, presumably involved in the processing and regular turnover of intracellular proteins. Catalyzes the removal of unsubstituted N-terminal amino acids from various peptides. This is Probable cytosol aminopeptidase from Rhizobium meliloti (strain 1021) (Ensifer meliloti).